Reading from the N-terminus, the 156-residue chain is Small ribosomal subunit protein uS7 (156 aa).

This sequence belongs to the universal ribosomal protein uS7 family. As to quaternary structure, part of the 30S ribosomal subunit. Contacts proteins S9 and S11.

One of the primary rRNA binding proteins, it binds directly to 16S rRNA where it nucleates assembly of the head domain of the 30S subunit. Is located at the subunit interface close to the decoding center, probably blocks exit of the E-site tRNA. The protein is Small ribosomal subunit protein uS7 of Desulfitobacterium hafniense (strain Y51).